The sequence spans 415 residues: Diaminopimelate decarboxylase (415 aa).

K60 bears the N6-(pyridoxal phosphate)lysine mark. Pyridoxal 5'-phosphate-binding positions include G239 and 274 to 277; that span reads EPGR. Substrate contacts are provided by R277, R313, and Y317. The Proton donor role is filled by C344. E345 and Y372 together coordinate substrate. Pyridoxal 5'-phosphate is bound at residue Y372.

Belongs to the Orn/Lys/Arg decarboxylase class-II family. LysA subfamily. In terms of assembly, homodimer. It depends on pyridoxal 5'-phosphate as a cofactor.

It catalyses the reaction meso-2,6-diaminopimelate + H(+) = L-lysine + CO2. The protein operates within amino-acid biosynthesis; L-lysine biosynthesis via DAP pathway; L-lysine from DL-2,6-diaminopimelate: step 1/1. Its function is as follows. Specifically catalyzes the decarboxylation of meso-diaminopimelate (meso-DAP) to L-lysine. The protein is Diaminopimelate decarboxylase of Haemophilus influenzae (strain ATCC 51907 / DSM 11121 / KW20 / Rd).